The sequence spans 441 residues: Leucine-rich repeat-containing protein 17 (441 aa).

A signal peptide spans 1–18; sequence MRVVTIVILLCFCKAAEL. LRR repeat units follow at residues 82–103, 106–127, and 130–151; these read DLLH…MFSK, KLKS…AFFG, and KLTT…VFIY. The LRRCT 1 domain occupies 163-214; it reads NPWHCTCEIETLISMLQIPRNRNLGNYAKCESPQEQKNKKLRQIKSEQLCNE. An LRRNT domain is found at 225 to 268; that stretch reads QVSGRPPVIKPEVDSTFCHNYVFPIQTLDCKRKELKKVPNNIPP. 3 LRR repeats span residues 269–290, 293–314, and 317–340; these read DIVK…EFED, ELKK…AFLG, and HLEE…EDLY. The LRRCT 2 domain occupies 350–402; sequence NPWRCDYNIHYLYYWLKHHYNVHFNGLECKTPEEYKGWSVGKYIRSYYEECPK.

In terms of tissue distribution, expressed in osteoblast cell lines. Well expressed in ovary, heart, pancreas, skeletal muscle, lung, and fetal kidney and lung and only at the basal levels in the other tissues examined including adult kidney. More expressed in S-type neuroblastoma cells than in N-type neuroblastoma cells.

Its subcellular location is the secreted. The protein localises to the extracellular space. Involved in bone homeostasis. Acts as a negative regulator of RANKL-induced osteoclast precursor differentiation from bone marrow precursors. This chain is Leucine-rich repeat-containing protein 17 (LRRC17), found in Homo sapiens (Human).